The chain runs to 445 residues: NAD-specific glutamate dehydrogenase (445 aa).

Residue Lys124 is part of the active site.

Belongs to the Glu/Leu/Phe/Val dehydrogenases family. As to quaternary structure, homohexamer.

It is found in the cell surface. The enzyme catalyses L-glutamate + NAD(+) + H2O = 2-oxoglutarate + NH4(+) + NADH + H(+). Probably involved in degradation rather than biosynthesis of glutamate. This is NAD-specific glutamate dehydrogenase (gdh) from Porphyromonas gingivalis (strain ATCC 33277 / DSM 20709 / CIP 103683 / JCM 12257 / NCTC 11834 / 2561).